Consider the following 495-residue polypeptide: COP9 signalosome complex subunit 2 (495 aa).

The interval 1 to 26 is disordered; the sequence is MGDEYMDDDEDYGFEYEDDSGSEPDV. One can recognise a PCI domain in the interval 254–416; sequence AHTDFFEAFK…GMIEMPKNKK (163 aa). Residues 426 to 468 form a disordered region; the sequence is PNAGDQGTTKSDSKPGTSSEPSTTTSVTSSILQGPPATSSCHQ. A compositionally biased stretch (polar residues) spans 430–441; it reads DQGTTKSDSKPG. Residues 442 to 455 are compositionally biased toward low complexity; it reads TSSEPSTTTSVTSS.

The protein belongs to the CSN2 family. Component of the CSN complex, probably composed of csn-1, csn-2, csn-3, csn-4, csn-5, csn-6 and csn-7. Within the complex it probably interacts directly with csn-1, csn-3 and csn-4.

It is found in the cytoplasm. Its subcellular location is the nucleus. Its function is as follows. Essential component of the COP9 signalosome complex (CSN), a complex involved in various cellular and developmental processes. The CSN complex is an essential regulator of the ubiquitin (Ubl) conjugation pathway by mediating the deneddylation of the cullin subunits of the SCF-type E3 ligase complexes, leading to decrease the Ubl ligase activity of SCF. The CSN complex plays an essential role in embryogenesis and oogenesis and is required to regulate microtubule stability in the early embryo. Mediates mei-3/katanin targeting for degradation at the meiosis to mitosis transition via deneddylation of cul-3. This Caenorhabditis elegans protein is COP9 signalosome complex subunit 2 (csn-2).